We begin with the raw amino-acid sequence, 119 residues long: Translation initiation factor 1A (119 aa).

Residues 1–24 (MSEDDVDNSVKDFESGEENEESIG) form a disordered region. Residues 24–98 (GRVILPNKKK…EKADVVYRYT (75 aa)) enclose the S1-like domain.

Belongs to the eIF-1A family.

Functionally, seems to be required for maximal rate of protein biosynthesis. Enhances ribosome dissociation into subunits and stabilizes the binding of the initiator Met-tRNA(I) to 40 S ribosomal subunits. This is Translation initiation factor 1A (eIF1A) from Thermoplasma acidophilum (strain ATCC 25905 / DSM 1728 / JCM 9062 / NBRC 15155 / AMRC-C165).